The following is a 285-amino-acid chain: Nucleotide-binding protein GSU1884 (285 aa).

8–15 (GLSGSGKS) contacts ATP. Residue 59-62 (DIRG) coordinates GTP.

The protein belongs to the RapZ-like family.

Functionally, displays ATPase and GTPase activities. The protein is Nucleotide-binding protein GSU1884 of Geobacter sulfurreducens (strain ATCC 51573 / DSM 12127 / PCA).